The chain runs to 240 residues: Triosephosphate isomerase (240 aa).

9–11 (NWK) lines the substrate pocket. Catalysis depends on His-94, which acts as the Electrophile. Glu-163 functions as the Proton acceptor in the catalytic mechanism. Residues Gly-169, Ser-202, and 223–224 (GG) contribute to the substrate site.

It belongs to the triosephosphate isomerase family. Homodimer.

It is found in the cytoplasm. The enzyme catalyses D-glyceraldehyde 3-phosphate = dihydroxyacetone phosphate. It participates in carbohydrate biosynthesis; gluconeogenesis. Its pathway is carbohydrate degradation; glycolysis; D-glyceraldehyde 3-phosphate from glycerone phosphate: step 1/1. Its function is as follows. Involved in the gluconeogenesis. Catalyzes stereospecifically the conversion of dihydroxyacetone phosphate (DHAP) to D-glyceraldehyde-3-phosphate (G3P). The protein is Triosephosphate isomerase of Gloeobacter violaceus (strain ATCC 29082 / PCC 7421).